A 586-amino-acid polypeptide reads, in one-letter code: Alpha-1,2-mannosyltransferase MNN5 (586 aa).

The signal sequence occupies residues 1 to 29 (MLIRLKKRKILQVIVSAVVLILFFCSVHN). N-linked (GlcNAc...) asparagine glycosylation is found at N113, N136, N259, and N264.

The protein belongs to the MNN1/MNT family. In terms of assembly, interacts with SVP26. Glycosylated.

The protein resides in the golgi apparatus. It localises to the cis-Golgi network. The protein operates within protein modification; protein glycosylation. Its function is as follows. Responsible for addition of first and second mannose residues to the outer chain of core N-linked polysaccharides and to O-linked mannotriose. Implicated in late Golgi modifications. This Saccharomyces cerevisiae (strain ATCC 204508 / S288c) (Baker's yeast) protein is Alpha-1,2-mannosyltransferase MNN5 (MNN5).